Reading from the N-terminus, the 707-residue chain is Heat shock protein hsp88 (707 aa).

The segment covering 662–692 has biased composition (basic and acidic residues); it reads EAEKAAKKAEEEARKAKEAAEKAAQEGAKDD. The interval 662–707 is disordered; that stretch reads EAEKAAKKAEEEARKAKEAAEKAAQEGAKDDEMTDADAPKPVVEEA.

Belongs to the heat shock protein 70 family. As to quaternary structure, binds hsp30 independent of temperature or substrate. In terms of processing, the N-terminus is blocked.

The protein resides in the cytoplasm. The polypeptide is Heat shock protein hsp88 (hsp88) (Neurospora crassa (strain ATCC 24698 / 74-OR23-1A / CBS 708.71 / DSM 1257 / FGSC 987)).